Reading from the N-terminus, the 433-residue chain is Enolase (433 aa).

Glutamine 164 is a binding site for (2R)-2-phosphoglycerate. Glutamate 206 functions as the Proton donor in the catalytic mechanism. 3 residues coordinate Mg(2+): aspartate 243, glutamate 289, and aspartate 316. Residues lysine 341, arginine 370, serine 371, and lysine 392 each contribute to the (2R)-2-phosphoglycerate site. Residue lysine 341 is the Proton acceptor of the active site.

This sequence belongs to the enolase family. Requires Mg(2+) as cofactor.

The protein resides in the cytoplasm. Its subcellular location is the secreted. It localises to the cell surface. The enzyme catalyses (2R)-2-phosphoglycerate = phosphoenolpyruvate + H2O. Its pathway is carbohydrate degradation; glycolysis; pyruvate from D-glyceraldehyde 3-phosphate: step 4/5. Catalyzes the reversible conversion of 2-phosphoglycerate (2-PG) into phosphoenolpyruvate (PEP). It is essential for the degradation of carbohydrates via glycolysis. The polypeptide is Enolase (Borreliella afzelii (strain PKo) (Borrelia afzelii)).